Here is an 84-residue protein sequence, read N- to C-terminus: Small ribosomal subunit protein uS17 (84 aa).

Belongs to the universal ribosomal protein uS17 family. As to quaternary structure, part of the 30S ribosomal subunit.

Functionally, one of the primary rRNA binding proteins, it binds specifically to the 5'-end of 16S ribosomal RNA. This chain is Small ribosomal subunit protein uS17, found in Borrelia recurrentis (strain A1).